Here is a 237-residue protein sequence, read N- to C-terminus: MFRALTLKASARPVVAGLCSRQAPIAAVRYMSTPSPQDPKAKASSILDALPGNTALSKTGILATSAAAAVYAISNQLYVLNEETILVATFTGVVLAGIKFLAPAYNEFAENRVKQVSSILNSSRTKHVDAVKERIESVSELKNVSDTTKVLFDVSKETVKLEAEAFELKQQVDLAAEAKSVLDSWVRYEASVRQLQQQQIADSVVAKVQSELGNPKFQEKVLQQSVADVEKLLANLK.

Residues 1-30 (MFRALTLKASARPVVAGLCSRQAPIAAVRY) constitute a mitochondrion transit peptide.

Belongs to the eukaryotic ATPase B chain family.

The protein resides in the mitochondrion. Its subcellular location is the mitochondrion inner membrane. Functionally, mitochondrial membrane ATP synthase (F(1)F(0) ATP synthase or Complex V) produces ATP from ADP in the presence of a proton gradient across the membrane which is generated by electron transport complexes of the respiratory chain. F-type ATPases consist of two structural domains, F(1) - containing the extramembraneous catalytic core, and F(0) - containing the membrane proton channel, linked together by a central stalk and a peripheral stalk. During catalysis, ATP synthesis in the catalytic domain of F(1) is coupled via a rotary mechanism of the central stalk subunits to proton translocation. Part of the complex F(0) domain and the peripheric stalk, which acts as a stator to hold the catalytic alpha(3)beta(3) subcomplex and subunit a/ATP6 static relative to the rotary elements. This Kluyveromyces lactis (strain ATCC 8585 / CBS 2359 / DSM 70799 / NBRC 1267 / NRRL Y-1140 / WM37) (Yeast) protein is ATP synthase subunit 4, mitochondrial (ATP4).